Here is a 480-residue protein sequence, read N- to C-terminus: UDP-N-acetylmuramate--L-alanine ligase (480 aa).

122-128 (GTHGKTT) is an ATP binding site.

The protein belongs to the MurCDEF family.

It is found in the cytoplasm. It catalyses the reaction UDP-N-acetyl-alpha-D-muramate + L-alanine + ATP = UDP-N-acetyl-alpha-D-muramoyl-L-alanine + ADP + phosphate + H(+). The protein operates within cell wall biogenesis; peptidoglycan biosynthesis. Its function is as follows. Cell wall formation. This is UDP-N-acetylmuramate--L-alanine ligase from Pseudomonas aeruginosa (strain LESB58).